The primary structure comprises 591 residues: 2-succinyl-5-enolpyruvyl-6-hydroxy-3-cyclohexene-1-carboxylate synthase (591 aa).

This sequence belongs to the TPP enzyme family. MenD subfamily. In terms of assembly, homodimer. Mg(2+) is required as a cofactor. Mn(2+) serves as cofactor. It depends on thiamine diphosphate as a cofactor.

It carries out the reaction isochorismate + 2-oxoglutarate + H(+) = 5-enolpyruvoyl-6-hydroxy-2-succinyl-cyclohex-3-ene-1-carboxylate + CO2. It functions in the pathway quinol/quinone metabolism; 1,4-dihydroxy-2-naphthoate biosynthesis; 1,4-dihydroxy-2-naphthoate from chorismate: step 2/7. Its pathway is quinol/quinone metabolism; menaquinone biosynthesis. Catalyzes the thiamine diphosphate-dependent decarboxylation of 2-oxoglutarate and the subsequent addition of the resulting succinic semialdehyde-thiamine pyrophosphate anion to isochorismate to yield 2-succinyl-5-enolpyruvyl-6-hydroxy-3-cyclohexene-1-carboxylate (SEPHCHC). The polypeptide is 2-succinyl-5-enolpyruvyl-6-hydroxy-3-cyclohexene-1-carboxylate synthase (Salinibacter ruber (strain DSM 13855 / M31)).